The sequence spans 366 residues: 15-cis-zeta-carotene isomerase, chloroplastic (366 aa).

A chloroplast-targeting transit peptide spans 1–45; the sequence is MASQLRLHLAATPPLLPHRRPHLARPLCPTLNPIRAPLPPLSRVL. 6 helical membrane-spanning segments follow: residues 94–114, 136–156, 171–191, 203–223, 260–280, and 338–358; these read SWAY…VLWI, EVVM…MASL, VLFA…FINH, GITG…FFLY, VIWC…AASV, and LPYV…PLMQ.

As to expression, expressed in leaves and roots, and at lower levels in embryos and endosperm.

Its subcellular location is the plastid. It is found in the chloroplast membrane. It carries out the reaction 9,9',15-tri-cis-zeta-carotene = 9,9'-di-cis-zeta-carotene. Isomerase involved in the biosynthesis of carotenoids. Catalyzes the cis- to trans-conversion of the 15-cis-bond in 9,15,9'-tri-cis-zeta-carotene. This Zea mays (Maize) protein is 15-cis-zeta-carotene isomerase, chloroplastic.